The following is a 319-amino-acid chain: tRNA dimethylallyltransferase (319 aa).

15–22 (GPTASGKS) serves as a coordination point for ATP. A substrate-binding site is contributed by 17 to 22 (TASGKS). Interaction with substrate tRNA stretches follow at residues 40-43 (DSRQ) and 164-168 (QRLVR).

It belongs to the IPP transferase family. As to quaternary structure, monomer. The cofactor is Mg(2+).

It catalyses the reaction adenosine(37) in tRNA + dimethylallyl diphosphate = N(6)-dimethylallyladenosine(37) in tRNA + diphosphate. Its function is as follows. Catalyzes the transfer of a dimethylallyl group onto the adenine at position 37 in tRNAs that read codons beginning with uridine, leading to the formation of N6-(dimethylallyl)adenosine (i(6)A). The protein is tRNA dimethylallyltransferase of Chlorobium phaeobacteroides (strain DSM 266 / SMG 266 / 2430).